The chain runs to 25 residues: Cysteine-rich venom protein 25 (25 aa).

The disordered stretch occupies residues 1 to 25; the sequence is NVDFNSESTRRKKKQKEIVDLXNSL.

The protein belongs to the CRISP family. In terms of processing, contains 8 disulfide bonds. In terms of tissue distribution, expressed by the venom gland.

It localises to the secreted. This Naja haje haje (Egyptian cobra) protein is Cysteine-rich venom protein 25.